Here is a 177-residue protein sequence, read N- to C-terminus: 2-C-methyl-D-erythritol 2,4-cyclodiphosphate synthase (177 aa).

The a divalent metal cation site is built by Asp8 and His10. 4-CDP-2-C-methyl-D-erythritol 2-phosphate is bound by residues 8–10 (DVH) and 34–35 (HS). Residue His42 participates in a divalent metal cation binding. 4-CDP-2-C-methyl-D-erythritol 2-phosphate is bound by residues 56–58 (DIG), 61–65 (FPDTD), 132–135 (TTEE), Phe139, and Arg142.

This sequence belongs to the IspF family. As to quaternary structure, homotrimer. Requires a divalent metal cation as cofactor.

It carries out the reaction 4-CDP-2-C-methyl-D-erythritol 2-phosphate = 2-C-methyl-D-erythritol 2,4-cyclic diphosphate + CMP. It participates in isoprenoid biosynthesis; isopentenyl diphosphate biosynthesis via DXP pathway; isopentenyl diphosphate from 1-deoxy-D-xylulose 5-phosphate: step 4/6. Involved in the biosynthesis of isopentenyl diphosphate (IPP) and dimethylallyl diphosphate (DMAPP), two major building blocks of isoprenoid compounds. Catalyzes the conversion of 4-diphosphocytidyl-2-C-methyl-D-erythritol 2-phosphate (CDP-ME2P) to 2-C-methyl-D-erythritol 2,4-cyclodiphosphate (ME-CPP) with a corresponding release of cytidine 5-monophosphate (CMP). The polypeptide is 2-C-methyl-D-erythritol 2,4-cyclodiphosphate synthase (Agathobacter rectalis (strain ATCC 33656 / DSM 3377 / JCM 17463 / KCTC 5835 / VPI 0990) (Eubacterium rectale)).